Consider the following 79-residue polypeptide: MSNVTIYATDWCPYCRSLLKGLDGQEYDLIDVDQDEEAGEWVKSVNDGNRIVPTVRYSDGTHATNPLAAEVIAKIEALA.

One can recognise a Glutaredoxin domain in the interval 1–79 (MSNVTIYATD…EVIAKIEALA (79 aa)).

This sequence belongs to the glutaredoxin family.

The protein localises to the cytoplasm. The enzyme catalyses [mycoredoxin]-L-cysteine + arseno-mycothiol + H(+) = [mycoredoxin]-S-mycothiol-L-cysteine + arsenite. In terms of biological role, involved in defense against toxic arsenate. Involved in the mycothiol/myoredoxin redox pathway which uses a mycothioltransferase mechanism; functions as a monothiol mixed disulfide reductase and is recycled by a second mycothiol forming mycothione which in turn is reduced in a NADPH-dependent manner. The chain is Mycoredoxin 1 (mrx1) from Corynebacterium glutamicum (strain ATCC 13032 / K051).